A 445-amino-acid chain; its full sequence is Phosphoglucosamine mutase (445 aa).

Residue Ser-99 is the Phosphoserine intermediate of the active site. Positions 99, 242, 244, and 246 each coordinate Mg(2+). Ser-99 carries the post-translational modification Phosphoserine.

The protein belongs to the phosphohexose mutase family. The cofactor is Mg(2+). Activated by phosphorylation.

The catalysed reaction is alpha-D-glucosamine 1-phosphate = D-glucosamine 6-phosphate. Functionally, catalyzes the conversion of glucosamine-6-phosphate to glucosamine-1-phosphate. The polypeptide is Phosphoglucosamine mutase (Helicobacter pylori (strain HPAG1)).